Reading from the N-terminus, the 689-residue chain is Glycine--tRNA ligase beta subunit (689 aa).

This sequence belongs to the class-II aminoacyl-tRNA synthetase family. In terms of assembly, tetramer of two alpha and two beta subunits.

It is found in the cytoplasm. It catalyses the reaction tRNA(Gly) + glycine + ATP = glycyl-tRNA(Gly) + AMP + diphosphate. This chain is Glycine--tRNA ligase beta subunit, found in Escherichia coli (strain K12 / MC4100 / BW2952).